Here is a 319-residue protein sequence, read N- to C-terminus: 4-diphosphocytidyl-2-C-methyl-D-erythritol kinase (319 aa).

Residue K18 is part of the active site. Residue P103 to T113 coordinates ATP. D145 is a catalytic residue.

Belongs to the GHMP kinase family. IspE subfamily.

The enzyme catalyses 4-CDP-2-C-methyl-D-erythritol + ATP = 4-CDP-2-C-methyl-D-erythritol 2-phosphate + ADP + H(+). It participates in isoprenoid biosynthesis; isopentenyl diphosphate biosynthesis via DXP pathway; isopentenyl diphosphate from 1-deoxy-D-xylulose 5-phosphate: step 3/6. Functionally, catalyzes the phosphorylation of the position 2 hydroxy group of 4-diphosphocytidyl-2C-methyl-D-erythritol. The sequence is that of 4-diphosphocytidyl-2-C-methyl-D-erythritol kinase from Prochlorococcus marinus (strain NATL2A).